A 354-amino-acid polypeptide reads, in one-letter code: uncharacterized protein (354 aa).

The segment at 96-130 (QVCPASAPNGKRAMKIPKVKEPRGENSSKKSSADQ) is disordered. Basic and acidic residues predominate over residues 113–127 (KVKEPRGENSSKKSS).

This is an uncharacterized protein from Caenorhabditis elegans.